The following is a 230-amino-acid chain: Large ribosomal subunit protein uL1 (230 aa).

The protein belongs to the universal ribosomal protein uL1 family. As to quaternary structure, part of the 50S ribosomal subunit.

In terms of biological role, binds directly to 23S rRNA. The L1 stalk is quite mobile in the ribosome, and is involved in E site tRNA release. Functionally, protein L1 is also a translational repressor protein, it controls the translation of the L11 operon by binding to its mRNA. The polypeptide is Large ribosomal subunit protein uL1 (Paramagnetospirillum magneticum (strain ATCC 700264 / AMB-1) (Magnetospirillum magneticum)).